A 372-amino-acid chain; its full sequence is Lipoyl synthase, mitochondrial (372 aa).

The transit peptide at 1 to 27 (MSLRCGDAARTLGPRVFGRYFCSPVRP) directs the protein to the mitochondrion. [4Fe-4S] cluster is bound by residues C106, C111, C117, C137, C141, C144, and S352. In terms of domain architecture, Radical SAM core spans 122–341 (EYATATATIM…EKVGNELGFH (220 aa)).

The protein belongs to the radical SAM superfamily. Lipoyl synthase family. The cofactor is [4Fe-4S] cluster.

The protein resides in the mitochondrion. The enzyme catalyses [[Fe-S] cluster scaffold protein carrying a second [4Fe-4S](2+) cluster] + N(6)-octanoyl-L-lysyl-[protein] + 2 oxidized [2Fe-2S]-[ferredoxin] + 2 S-adenosyl-L-methionine + 4 H(+) = [[Fe-S] cluster scaffold protein] + N(6)-[(R)-dihydrolipoyl]-L-lysyl-[protein] + 4 Fe(3+) + 2 hydrogen sulfide + 2 5'-deoxyadenosine + 2 L-methionine + 2 reduced [2Fe-2S]-[ferredoxin]. Its pathway is protein modification; protein lipoylation via endogenous pathway; protein N(6)-(lipoyl)lysine from octanoyl-[acyl-carrier-protein]: step 2/2. Catalyzes the radical-mediated insertion of two sulfur atoms into the C-6 and C-8 positions of the octanoyl moiety bound to the lipoyl domains of lipoate-dependent enzymes, thereby converting the octanoylated domains into lipoylated derivatives. The polypeptide is Lipoyl synthase, mitochondrial (Homo sapiens (Human)).